The chain runs to 236 residues: UPF0173 metal-dependent hydrolase DSY1309 (236 aa).

The protein belongs to the UPF0173 family.

The protein is UPF0173 metal-dependent hydrolase DSY1309 of Desulfitobacterium hafniense (strain Y51).